We begin with the raw amino-acid sequence, 264 residues long: COP9 signalosome complex subunit 7b (264 aa).

An N-acetylalanine modification is found at A2. The PCI domain maps to 2 to 159; it reads AGEQKPSSNL…QLLEVDFCIG (158 aa). The stretch at 194-237 forms a coiled coil; that stretch reads RANQYKENHHRTQQQVEAEVSNIKKTLKATASSSAQEMEQQLAE. Positions 223 to 232 are enriched in polar residues; it reads TASSSAQEME. The disordered stretch occupies residues 223 to 264; sequence TASSSAQEMEQQLAERECPPHTEQRQPTKKMSKVKGLVSSRH. Residues 235 to 248 show a composition bias toward basic and acidic residues; the sequence is LAERECPPHTEQRQ.

It belongs to the CSN7/EIF3M family. CSN7 subfamily. As to quaternary structure, component of the CSN complex, composed of COPS1/GPS1, COPS2, COPS3, COPS4, COPS5, COPS6, COPS7 (COPS7A or COPS7B) and COPS8 and COPS9. In the complex, it probably interacts directly with COPS1, COPS2, COPS4, COPS5, COPS6 and COPS8. Interacts with EIF3S6.

The protein localises to the cytoplasm. It localises to the nucleus. Its function is as follows. Component of the COP9 signalosome complex (CSN), a complex involved in various cellular and developmental processes. The CSN complex is an essential regulator of the ubiquitin (Ubl) conjugation pathway by mediating the deneddylation of the cullin subunits of SCF-type E3 ligase complexes, leading to decrease the Ubl ligase activity of SCF-type complexes such as SCF, CSA or DDB2. The complex is also involved in phosphorylation of p53/TP53, JUN, I-kappa-B-alpha/NFKBIA, ITPK1 and IRF8/ICSBP, possibly via its association with CK2 and PKD kinases. CSN-dependent phosphorylation of TP53 and JUN promotes and protects degradation by the Ubl system, respectively. This Mus musculus (Mouse) protein is COP9 signalosome complex subunit 7b (Cops7b).